The sequence spans 439 residues: Trigger factor (439 aa).

Residues 162–247 (GDTVTIDYVG…IHEVKAKQLP (86 aa)) enclose the PPIase FKBP-type domain.

Belongs to the FKBP-type PPIase family. Tig subfamily.

It is found in the cytoplasm. The enzyme catalyses [protein]-peptidylproline (omega=180) = [protein]-peptidylproline (omega=0). Its function is as follows. Involved in protein export. Acts as a chaperone by maintaining the newly synthesized protein in an open conformation. Functions as a peptidyl-prolyl cis-trans isomerase. The sequence is that of Trigger factor from Lactobacillus delbrueckii subsp. bulgaricus (strain ATCC 11842 / DSM 20081 / BCRC 10696 / JCM 1002 / NBRC 13953 / NCIMB 11778 / NCTC 12712 / WDCM 00102 / Lb 14).